The primary structure comprises 86 residues: Beta-toxin To4 (86 aa).

An N-terminal signal peptide occupies residues 1–20 (MTRFVLFISCFFLIGMIVEC). An LCN-type CS-alpha/beta domain is found at 21 to 83 (KDGYLMEYGG…IWNRATNKCG (63 aa)). Cystine bridges form between cysteine 31/cysteine 82, cysteine 35/cysteine 57, cysteine 43/cysteine 63, and cysteine 47/cysteine 65. Cysteine 82 bears the Cysteine amide mark.

Belongs to the long (4 C-C) scorpion toxin superfamily. Sodium channel inhibitor family. Beta subfamily. In terms of tissue distribution, expressed by the venom gland.

It localises to the secreted. Its function is as follows. Beta toxins bind voltage-independently at site-4 of sodium channels (Nav) and shift the voltage of activation toward more negative potentials thereby affecting sodium channel activation and promoting spontaneous and repetitive firing. This toxin shows moderate inhibition of Nav1.1/SCN1A, Nav1.2/SCN2A, and Nav1.4/SCN4A, and promotes a left voltage shift on these channels. It exhibits similar potency on Nav1.2/SCN2A and Nav1.4/SCN4A (40-50% peak current inhibition at 0.5 uM), and weaker inhibition on Nav1.2 (20-30% peak current inhibition at 0.5 uM). The protein is Beta-toxin To4 of Tityus obscurus (Amazonian scorpion).